The sequence spans 201 residues: Small ribosomal subunit protein uS4c (201 aa).

An S4 RNA-binding domain is found at 89 to 157 (MRLDNILFRL…VQNYIASSDP (69 aa)).

Belongs to the universal ribosomal protein uS4 family. As to quaternary structure, part of the 30S ribosomal subunit. Contacts protein S5. The interaction surface between S4 and S5 is involved in control of translational fidelity.

Its subcellular location is the plastid. The protein localises to the chloroplast. Functionally, one of the primary rRNA binding proteins, it binds directly to 16S rRNA where it nucleates assembly of the body of the 30S subunit. With S5 and S12 plays an important role in translational accuracy. This is Small ribosomal subunit protein uS4c (rps4) from Triticum aestivum (Wheat).